A 526-amino-acid chain; its full sequence is Light-independent protochlorophyllide reductase subunit B (526 aa).

Asp36 is a [4Fe-4S] cluster binding site. The Proton donor role is filled by Asp290. A substrate-binding site is contributed by 425 to 426 (GL).

Belongs to the ChlB/BchB/BchZ family. As to quaternary structure, protochlorophyllide reductase is composed of three subunits; ChlL, ChlN and ChlB. Forms a heterotetramer of two ChlB and two ChlN subunits. Requires [4Fe-4S] cluster as cofactor.

It carries out the reaction chlorophyllide a + oxidized 2[4Fe-4S]-[ferredoxin] + 2 ADP + 2 phosphate = protochlorophyllide a + reduced 2[4Fe-4S]-[ferredoxin] + 2 ATP + 2 H2O. It participates in porphyrin-containing compound metabolism; chlorophyll biosynthesis (light-independent). Component of the dark-operative protochlorophyllide reductase (DPOR) that uses Mg-ATP and reduced ferredoxin to reduce ring D of protochlorophyllide (Pchlide) to form chlorophyllide a (Chlide). This reaction is light-independent. The NB-protein (ChlN-ChlB) is the catalytic component of the complex. This Prochlorococcus marinus (strain MIT 9515) protein is Light-independent protochlorophyllide reductase subunit B.